A 439-amino-acid polypeptide reads, in one-letter code: 3-phosphoshikimate 1-carboxyvinyltransferase (439 aa).

3-phosphoshikimate-binding residues include Lys-27, Ser-28, and Arg-32. Lys-27 is a binding site for phosphoenolpyruvate. Gly-101 and Arg-130 together coordinate phosphoenolpyruvate. 3-phosphoshikimate-binding residues include Ser-175, Gln-177, Asp-326, and Lys-353. Gln-177 contacts phosphoenolpyruvate. Catalysis depends on Asp-326, which acts as the Proton acceptor. Phosphoenolpyruvate contacts are provided by Arg-357 and Arg-399.

The protein belongs to the EPSP synthase family. In terms of assembly, monomer.

The protein resides in the cytoplasm. It carries out the reaction 3-phosphoshikimate + phosphoenolpyruvate = 5-O-(1-carboxyvinyl)-3-phosphoshikimate + phosphate. It participates in metabolic intermediate biosynthesis; chorismate biosynthesis; chorismate from D-erythrose 4-phosphate and phosphoenolpyruvate: step 6/7. Its function is as follows. Catalyzes the transfer of the enolpyruvyl moiety of phosphoenolpyruvate (PEP) to the 5-hydroxyl of shikimate-3-phosphate (S3P) to produce enolpyruvyl shikimate-3-phosphate and inorganic phosphate. The chain is 3-phosphoshikimate 1-carboxyvinyltransferase from Synechococcus sp. (strain WH7803).